A 441-amino-acid chain; its full sequence is Chitinase-like protein Idgf3 (441 aa).

An N-terminal signal peptide occupies residues 1–23 (MTGSLWLSLALSLAVLAQFKVSA). Residues 25–441 (PNLVCFYDSQ…MLRAIKYRLL (417 aa)) enclose the GH18 domain. Cysteine 29 and cysteine 56 are joined by a disulfide. N-linked (GlcNAc...) asparagine glycosylation occurs at asparagine 221. The disordered stretch occupies residues 309–331 (SGDSGMPVVPSTQGPAPAGPQSK). A disulfide bridge connects residues cysteine 342 and cysteine 425.

Belongs to the glycosyl hydrolase 18 family. IDGF subfamily. In terms of processing, glycosylated.

It is found in the secreted. Functionally, cooperates with insulin-like peptides to stimulate the proliferation, polarization and motility of imaginal disk cells. May act by stabilizing the binding of insulin-like peptides to its receptor through a simultaneous interaction with both molecules to form a multiprotein signaling complex. This Drosophila yakuba (Fruit fly) protein is Chitinase-like protein Idgf3 (Idgf3).